The sequence spans 147 residues: Large ribosomal subunit protein uL13 (147 aa).

This sequence belongs to the universal ribosomal protein uL13 family. As to quaternary structure, part of the 50S ribosomal subunit.

Functionally, this protein is one of the early assembly proteins of the 50S ribosomal subunit, although it is not seen to bind rRNA by itself. It is important during the early stages of 50S assembly. This chain is Large ribosomal subunit protein uL13, found in Streptomyces avermitilis (strain ATCC 31267 / DSM 46492 / JCM 5070 / NBRC 14893 / NCIMB 12804 / NRRL 8165 / MA-4680).